The primary structure comprises 412 residues: L-cysteine:1D-myo-inositol 2-amino-2-deoxy-alpha-D-glucopyranoside ligase (412 aa).

Positions 1 to 30 (MQTWSSPSVPKLRGAPRPLRLHDTATGEVR) are disordered. Cys43 contacts Zn(2+). L-cysteinyl-5'-AMP is bound by residues 43–46 (CGIT), Thr58, and 81–83 (NVT). Residues 45-55 (ITPYDATHLGH) carry the 'HIGH' region motif. The short motif at 187 to 192 (ERGGDP) is the 'ERGGDP' region element. Residue Trp227 coordinates L-cysteinyl-5'-AMP. Cys231 is a binding site for Zn(2+). 249–251 (GSD) lines the L-cysteinyl-5'-AMP pocket. His256 serves as a coordination point for Zn(2+). L-cysteinyl-5'-AMP is bound at residue Ile283. Positions 289–293 (KMSKS) match the 'KMSKS' region motif.

It belongs to the class-I aminoacyl-tRNA synthetase family. MshC subfamily. Monomer. Zn(2+) is required as a cofactor.

It catalyses the reaction 1D-myo-inositol 2-amino-2-deoxy-alpha-D-glucopyranoside + L-cysteine + ATP = 1D-myo-inositol 2-(L-cysteinylamino)-2-deoxy-alpha-D-glucopyranoside + AMP + diphosphate + H(+). Functionally, catalyzes the ATP-dependent condensation of GlcN-Ins and L-cysteine to form L-Cys-GlcN-Ins. This chain is L-cysteine:1D-myo-inositol 2-amino-2-deoxy-alpha-D-glucopyranoside ligase, found in Actinosynnema mirum (strain ATCC 29888 / DSM 43827 / JCM 3225 / NBRC 14064 / NCIMB 13271 / NRRL B-12336 / IMRU 3971 / 101).